Here is a 3093-residue protein sequence, read N- to C-terminus: Intermembrane lipid transfer protein VPS13A (3093 aa).

Residues 3–116 (FESVVVDVLN…LMEAKQQELK (114 aa)) form the Chorein N-terminal domain. A TPR 1 repeat occupies 373-406 (LTSKKPPGELLVSLEELEKTLDVLNITIARQQAE). Position 839 is a phosphoserine (Ser839). The FFAT motif lies at 842 to 848 (EFFDAPC). Ser1416 is subject to Phosphoserine. Residues 2209 to 2454 (VAFHSPYWMV…VFYTWADPVG (246 aa)) form the SHR-BD domain. The stretch at 2860-2898 (ILGLDVLGNPFGLIREFSEGVEAFFYEPYQGAIQGPEEF) is one TPR 2 repeat. Positions 2953–3027 (PAGFREGITR…SSTFQGIKRA (75 aa)) are required for lipid droplet localization.

This sequence belongs to the VPS13 family. As to quaternary structure, interacts (via FFAT motif) with VAPA and VAPB. Interacts with RAB7A. Interacts with XK.

The protein localises to the mitochondrion outer membrane. It is found in the endoplasmic reticulum membrane. It localises to the endosome membrane. Its subcellular location is the lysosome membrane. The protein resides in the lipid droplet. The protein localises to the golgi apparatus. It is found in the cytoplasmic vesicle. It localises to the secretory vesicle. Its subcellular location is the neuronal dense core vesicle. Mediates the transfer of lipids between membranes at organelle contact sites. Required for the formation or stabilization of ER-mitochondria contact sites which enable transfer of lipids between the ER and mitochondria. Negatively regulates lipid droplet size and motility. Required for efficient lysosomal protein degradation. The chain is Intermembrane lipid transfer protein VPS13A (VPS13A) from Macaca fascicularis (Crab-eating macaque).